Consider the following 257-residue polypeptide: Putative transcription factor R430 (257 aa).

Disordered regions lie at residues 1 to 35 and 58 to 77; these read MEKF…DNNS and SLKS…PNKS. Over residues 7–25 the composition is skewed to low complexity; the sequence is TDNTTDNTTDNTTDNTTDN. A compositionally biased stretch (basic and acidic residues) spans 26-35; the sequence is TTDKLTDNNS.

This sequence belongs to the nucleo-cytoplasmic large DNA viruses (NCLDVs) VLTF-3 family.

In terms of biological role, putative transcription factor. In Acanthamoeba polyphaga (Amoeba), this protein is Putative transcription factor R430.